We begin with the raw amino-acid sequence, 428 residues long: Light-independent protochlorophyllide reductase subunit N (428 aa).

[4Fe-4S] cluster-binding residues include cysteine 31, cysteine 56, and cysteine 117.

The protein belongs to the BchN/ChlN family. As to quaternary structure, protochlorophyllide reductase is composed of three subunits; BchL, BchN and BchB. Forms a heterotetramer of two BchB and two BchN subunits. [4Fe-4S] cluster is required as a cofactor.

The catalysed reaction is chlorophyllide a + oxidized 2[4Fe-4S]-[ferredoxin] + 2 ADP + 2 phosphate = protochlorophyllide a + reduced 2[4Fe-4S]-[ferredoxin] + 2 ATP + 2 H2O. It participates in porphyrin-containing compound metabolism; bacteriochlorophyll biosynthesis (light-independent). Component of the dark-operative protochlorophyllide reductase (DPOR) that uses Mg-ATP and reduced ferredoxin to reduce ring D of protochlorophyllide (Pchlide) to form chlorophyllide a (Chlide). This reaction is light-independent. The NB-protein (BchN-BchB) is the catalytic component of the complex. The chain is Light-independent protochlorophyllide reductase subunit N from Rhodopseudomonas palustris (strain HaA2).